A 377-amino-acid chain; its full sequence is ATP phosphoribosyltransferase regulatory subunit (377 aa).

Belongs to the class-II aminoacyl-tRNA synthetase family. HisZ subfamily. As to quaternary structure, heteromultimer composed of HisG and HisZ subunits.

The protein localises to the cytoplasm. It participates in amino-acid biosynthesis; L-histidine biosynthesis; L-histidine from 5-phospho-alpha-D-ribose 1-diphosphate: step 1/9. Its function is as follows. Required for the first step of histidine biosynthesis. May allow the feedback regulation of ATP phosphoribosyltransferase activity by histidine. This chain is ATP phosphoribosyltransferase regulatory subunit, found in Sinorhizobium medicae (strain WSM419) (Ensifer medicae).